The primary structure comprises 199 residues: Protein CPL1 (199 aa).

Positions 1-30 are cleaved as a signal peptide; sequence MFSIPPSVRRLVFLFLIAAPLLSIVLPVAA. The segment at 34-58 is disordered; sequence GVDPPSKLQPRAPQPSRRMGATKRS. N148 is a glycosylation site (N-linked (GlcNAc...) asparagine).

It is found in the secreted. Virulence factor which promotes fungal virulence by enhancing type 2 inflammation in the mouse host. Likely binds mouse Tlr4 independently of Ly96/Md2 and activates Tlr4 signaling to drive Stat3 phosphorylation in interstitial macrophages, which promotes the initial induction of Arg1/arginase-1 and increases macrophage sensitivity to Il4 signaling. The chain is Protein CPL1 from Cryptococcus neoformans var. grubii serotype A (strain H99 / ATCC 208821 / CBS 10515 / FGSC 9487) (Filobasidiella neoformans var. grubii).